The primary structure comprises 257 residues: Zinc-finger homeodomain protein 6 (257 aa).

Positions 1–35 are disordered; the sequence is MEFRGHDEPVDEMGVAYGRTPPSSSSSPAASASAG. The segment covering 21–35 has biased composition (low complexity); sequence PPSSSSSPAASASAG. Residues 45 to 93 form a ZF-HD dimerization-type; degenerate zinc finger; the sequence is YHECLRNHAAAMGGHVVDGCGEFMPMPGDAADALKCAACGCHRSFHRKD. Residues 106-125 are compositionally biased toward pro residues; that stretch reads PSPPTPRVPLLMPPPQPQPH. Disordered regions lie at residues 106 to 182 and 228 to 257; these read PSPP…TKFT and NNKS…QQQQ. Positions 141-155 are enriched in low complexity; it reads YHHTPSGSGGTTTES. The segment at residues 174–237 is a DNA-binding region (homeobox); the sequence is RKRFRTKFTP…NNKSSIGSSS (64 aa). The segment covering 242-257 has biased composition (low complexity); it reads RRQPQEQQSQQQQQQQ.

As to quaternary structure, homo- and heterodimer with other ZFHD proteins.

The protein resides in the nucleus. Its function is as follows. Putative transcription factor. The chain is Zinc-finger homeodomain protein 6 (ZHD6) from Oryza sativa subsp. indica (Rice).